The sequence spans 517 residues: Maturase K (517 aa).

It belongs to the intron maturase 2 family. MatK subfamily.

Its subcellular location is the plastid. The protein localises to the chloroplast. Its function is as follows. Usually encoded in the trnK tRNA gene intron. Probably assists in splicing its own and other chloroplast group II introns. This is Maturase K from Palhinhaea cernua (Nodding clubmoss).